The sequence spans 452 residues: Probable carboxypeptidase ACLA_088580 (452 aa).

Residues 1 to 18 (MRSLTLLLSLSTALRSVA) form the signal peptide. N-linked (GlcNAc...) asparagine glycans are attached at residues N107 and N156. D175 is a Zn(2+) binding site. E207 serves as the catalytic Proton acceptor. E208 serves as a coordination point for Zn(2+).

It belongs to the peptidase M20A family. It depends on Zn(2+) as a cofactor.

The protein resides in the secreted. The chain is Probable carboxypeptidase ACLA_088580 from Aspergillus clavatus (strain ATCC 1007 / CBS 513.65 / DSM 816 / NCTC 3887 / NRRL 1 / QM 1276 / 107).